We begin with the raw amino-acid sequence, 120 residues long: Large ribosomal subunit protein uL18 (120 aa).

It belongs to the universal ribosomal protein uL18 family. As to quaternary structure, part of the 50S ribosomal subunit; part of the 5S rRNA/L5/L18/L25 subcomplex. Contacts the 5S and 23S rRNAs.

Functionally, this is one of the proteins that bind and probably mediate the attachment of the 5S RNA into the large ribosomal subunit, where it forms part of the central protuberance. This chain is Large ribosomal subunit protein uL18, found in Macrococcus caseolyticus (strain JCSC5402) (Macrococcoides caseolyticum).